The primary structure comprises 125 residues: Large-conductance mechanosensitive channel (125 aa).

The next 3 membrane-spanning stretches (helical) occupy residues 19 to 39 (VGVI…SNLI), 42 to 62 (LIGI…IGSA), and 67 to 87 (GSFL…FLMV).

Belongs to the MscL family. Homopentamer.

The protein resides in the cell membrane. Functionally, channel that opens in response to stretch forces in the membrane lipid bilayer. May participate in the regulation of osmotic pressure changes within the cell. The polypeptide is Large-conductance mechanosensitive channel (Limosilactobacillus fermentum (strain NBRC 3956 / LMG 18251) (Lactobacillus fermentum)).